A 92-amino-acid chain; its full sequence is Ig kappa chain V region 3381 (92 aa).

A framework-1 region spans residues 1-23 (AFELTQTPASVEAAVGGTVTINC). A complementarity-determining-1 region spans residues 24–34 (QASESISNWLA). Residues 35 to 49 (WYQQKPGQPXKLLIY) are framework-2. The interval 50–56 (KASTLAS) is complementarity-determining-2. The tract at residues 57-88 (GVSSRFKGSGSGTQFTLTISDLECADAATYYC) is framework-3. Residues 89–92 (QSTD) form a complementarity-determining-3 region.

This Oryctolagus cuniculus (Rabbit) protein is Ig kappa chain V region 3381.